The sequence spans 84 residues: UPF0153 protein PA1578.1 (84 aa).

Belongs to the UPF0153 family.

This is UPF0153 protein PA1578.1 from Pseudomonas aeruginosa (strain ATCC 15692 / DSM 22644 / CIP 104116 / JCM 14847 / LMG 12228 / 1C / PRS 101 / PAO1).